An 89-amino-acid chain; its full sequence is Small ribosomal subunit protein bS20 (89 aa).

The protein belongs to the bacterial ribosomal protein bS20 family.

Its function is as follows. Binds directly to 16S ribosomal RNA. In Stenotrophomonas maltophilia (strain R551-3), this protein is Small ribosomal subunit protein bS20.